A 406-amino-acid polypeptide reads, in one-letter code: Putative gustatory receptor 59f (406 aa).

Topologically, residues Met1–Thr36 are cytoplasmic. Residues Leu37–Gly57 form a helical membrane-spanning segment. Over Cys58–Ser69 the chain is Extracellular. Residues Trp70–Thr90 form a helical membrane-spanning segment. Residues Thr91 to Tyr99 are Cytoplasmic-facing. The chain crosses the membrane as a helical span at residues Leu100–Trp120. The Extracellular segment spans residues Gln121 to Arg154. A glycan (N-linked (GlcNAc...) asparagine) is linked at Asn147. Residues Leu155 to His175 traverse the membrane as a helical segment. Topologically, residues Lys176 to Tyr189 are cytoplasmic. Residues Val190–Ile210 form a helical membrane-spanning segment. The Extracellular segment spans residues Ala211–Tyr259. An N-linked (GlcNAc...) asparagine glycan is attached at Asn254. The chain crosses the membrane as a helical span at residues Ser260 to Tyr280. The Cytoplasmic portion of the chain corresponds to Gln281–Asn364. Residues Leu365–Leu385 traverse the membrane as a helical segment. Over Gln386 to Lys406 the chain is Extracellular. An N-linked (GlcNAc...) asparagine glycan is attached at Asn401.

It belongs to the insect chemoreceptor superfamily. Gustatory receptor (GR) family. Gr10a subfamily. Expressed in the adult abdomen and wing. In larvae, is expressed in neurons of the terminal external chemosensory organ.

It is found in the cell membrane. In terms of biological role, probable gustatory receptor which mediates acceptance or avoidance behavior, depending on its substrates. This is Putative gustatory receptor 59f (Gr59f) from Drosophila melanogaster (Fruit fly).